Consider the following 880-residue polypeptide: Kinesin heavy chain (880 aa).

In terms of domain architecture, Kinesin motor spans 4–327 (SIKVVCRFRP…LRFGMRAKAI (324 aa)). ATP is bound by residues 85–92 (GQTGAGKS) and 235–242 (GSEKVGKT). The interval 388 to 426 (VSGAKAAAAQTPRPSTPSRLATESRAETPVAERSATPGI) is disordered. The span at 399–408 (PRPSTPSRLA) shows a compositional bias: polar residues. Residues 428–849 (IDKDEREEFL…QEKLTTASHR (422 aa)) are a coiled coil.

The protein belongs to the TRAFAC class myosin-kinesin ATPase superfamily. Kinesin family. Kinesin subfamily.

Its subcellular location is the cytoplasm. The protein localises to the cytoskeleton. Kinesin is a microtubule-associated force-producing protein that may play a role in organelle transport. Its motor activity is directed toward the microtubule's plus end. The polypeptide is Kinesin heavy chain (klp1) (Botryotinia fuckeliana (Noble rot fungus)).